A 602-amino-acid polypeptide reads, in one-letter code: Elongation factor 4 (602 aa).

The 183-residue stretch at 2–184 folds into the tr-type G domain; the sequence is KKIRNFAIIA…RIVRDIPPPK (183 aa). GTP contacts are provided by residues 14-19 and 131-134; these read DHGKST and NKID.

The protein belongs to the TRAFAC class translation factor GTPase superfamily. Classic translation factor GTPase family. LepA subfamily.

The protein resides in the cell membrane. It catalyses the reaction GTP + H2O = GDP + phosphate + H(+). Functionally, required for accurate and efficient protein synthesis under certain stress conditions. May act as a fidelity factor of the translation reaction, by catalyzing a one-codon backward translocation of tRNAs on improperly translocated ribosomes. Back-translocation proceeds from a post-translocation (POST) complex to a pre-translocation (PRE) complex, thus giving elongation factor G a second chance to translocate the tRNAs correctly. Binds to ribosomes in a GTP-dependent manner. In Baumannia cicadellinicola subsp. Homalodisca coagulata, this protein is Elongation factor 4.